The sequence spans 248 residues: Large ribosomal subunit protein uL30B (248 aa).

Positions 1–45 are disordered; that stretch reads MSQKKQKIQVEQKVPENVAKKTQRDSKLRDAVAKRRTERLAANKT. The segment covering 8 to 41 has biased composition (basic and acidic residues); sequence IQVEQKVPENVAKKTQRDSKLRDAVAKRRTERLA.

This sequence belongs to the universal ribosomal protein uL30 family.

Binds to G-rich structures in 28S rRNA and in mRNAs. Plays a regulatory role in the translation apparatus; inhibits cell-free translation of mRNAs. This Paramecium tetraurelia protein is Large ribosomal subunit protein uL30B (Rpl7-2).